We begin with the raw amino-acid sequence, 275 residues long: Elongation factor Ts (275 aa).

Lysine 36 is covalently cross-linked (Isoglutamyl lysine isopeptide (Lys-Gln) (interchain with Q-Cter in protein Pup)). The segment at threonine 76–valine 79 is involved in Mg(2+) ion dislocation from EF-Tu.

Belongs to the EF-Ts family.

It is found in the cytoplasm. Associates with the EF-Tu.GDP complex and induces the exchange of GDP to GTP. It remains bound to the aminoacyl-tRNA.EF-Tu.GTP complex up to the GTP hydrolysis stage on the ribosome. This Mycolicibacterium smegmatis (strain ATCC 700084 / mc(2)155) (Mycobacterium smegmatis) protein is Elongation factor Ts.